A 344-amino-acid polypeptide reads, in one-letter code: Arginine N-succinyltransferase (344 aa).

A succinyl-CoA-binding site is contributed by leucine 125. Residue histidine 229 is the Proton donor of the active site.

It belongs to the arginine N-succinyltransferase family.

The catalysed reaction is succinyl-CoA + L-arginine = N(2)-succinyl-L-arginine + CoA + H(+). Its pathway is amino-acid degradation; L-arginine degradation via AST pathway; L-glutamate and succinate from L-arginine: step 1/5. Functionally, catalyzes the transfer of succinyl-CoA to arginine to produce N(2)-succinylarginine. In Salmonella dublin (strain CT_02021853), this protein is Arginine N-succinyltransferase.